Consider the following 201-residue polypeptide: NADH-quinone oxidoreductase subunit C (201 aa).

Belongs to the complex I 30 kDa subunit family. As to quaternary structure, NDH-1 is composed of 14 different subunits. Subunits NuoB, C, D, E, F, and G constitute the peripheral sector of the complex.

It is found in the cell inner membrane. The enzyme catalyses a quinone + NADH + 5 H(+)(in) = a quinol + NAD(+) + 4 H(+)(out). Functionally, NDH-1 shuttles electrons from NADH, via FMN and iron-sulfur (Fe-S) centers, to quinones in the respiratory chain. The immediate electron acceptor for the enzyme in this species is believed to be ubiquinone. Couples the redox reaction to proton translocation (for every two electrons transferred, four hydrogen ions are translocated across the cytoplasmic membrane), and thus conserves the redox energy in a proton gradient. In Ruegeria sp. (strain TM1040) (Silicibacter sp.), this protein is NADH-quinone oxidoreductase subunit C.